The sequence spans 150 residues: Ribonuclease P protein subunit p21 (150 aa).

Ala-2 carries the N-acetylalanine modification. Positions 62, 65, 92, and 95 each coordinate Zn(2+). Residues 121–150 are disordered; sequence QADINPSEPLPNIADLPKENIQTQALNTSE. Positions 140-150 are enriched in polar residues; it reads NIQTQALNTSE.

It belongs to the eukaryotic/archaeal RNase P protein component 4 family. RNase P consists of a catalytic RNA moiety and about 10 protein subunits; POP1, POP4, POP5, POP7, RPP14, RPP21, RPP25, RPP30, RPP38 and RPP40. Within the RNase P complex, POP1, POP7 and RPP25 form the 'finger' subcomplex, POP5, RPP14, RPP40 and homodimeric RPP30 form the 'palm' subcomplex, and RPP21, POP4 and RPP38 form the 'wrist' subcomplex. All subunits of the RNase P complex interact with the catalytic RNA.

The protein resides in the nucleus. The protein localises to the nucleolus. Functionally, component of ribonuclease P, a ribonucleoprotein complex that generates mature tRNA molecules by cleaving their 5'-ends. This Mus musculus (Mouse) protein is Ribonuclease P protein subunit p21 (Rpp21).